A 196-amino-acid polypeptide reads, in one-letter code: MRSQVRWRLCWENELQLSDHIELAEFFRRTYGPTGAFNAKPFEGSRSWAGARPEFRAIAYDSSGIAAHMGLLRRFIKIDGADLLVAELGLYGIRRDLEGLGISSSLRVVRPVLQELGVPFGFGTVRPALHKHVARLGRGGLLVVKSGIRVRSTLRDALLDKPPTRIDDALVVVLPVGRPISDWPAGEMIDRNGAEL.

Belongs to the NodA family.

It localises to the cytoplasm. Its function is as follows. N-acyltransferase required for nodulation. Acts in the production of a small, heat-stable compound (Nod) that stimulates mitosis in various plant protoplasts. This chain is Nodulation protein A, found in Mesorhizobium plurifarium.